Here is a 215-residue protein sequence, read N- to C-terminus: Adenylate kinase (215 aa).

An ATP-binding site is contributed by 10 to 15 (GTGKGT). The interval 30–59 (STGHILRKISTKKTLFGEKIKNIINSGKLV) is NMP. Residues threonine 31, arginine 36, 57–59 (KLV), 85–88 (GFPR), and glutamine 92 each bind AMP. Residues 122-157 (TRTINPITGTIYNNVIQKNSELKNLKINTLKSRLDD) form an LID region. ATP-binding positions include arginine 123 and 132 to 133 (IY). Arginine 154 and arginine 165 together coordinate AMP. Residue asparagine 198 coordinates ATP.

It belongs to the adenylate kinase family. Monomer.

The protein localises to the cytoplasm. The enzyme catalyses AMP + ATP = 2 ADP. It functions in the pathway purine metabolism; AMP biosynthesis via salvage pathway; AMP from ADP: step 1/1. Its function is as follows. Catalyzes the reversible transfer of the terminal phosphate group between ATP and AMP. Plays an important role in cellular energy homeostasis and in adenine nucleotide metabolism. The polypeptide is Adenylate kinase (Buchnera aphidicola subsp. Baizongia pistaciae (strain Bp)).